Reading from the N-terminus, the 146-residue chain is Tyrosinase cofactor (146 aa).

A signal peptide (tat-type signal) is located at residues methionine 1–alanine 30. Residues arginine 65–glycine 85 are disordered. Residues aspartate 69–glycine 85 are compositionally biased toward gly residues.

It belongs to the melC1 family. Post-translationally, predicted to be exported by the Tat system. The position of the signal peptide cleavage has not been experimentally proven.

Its function is as follows. This protein may function to deliver copper to tyrosinase. The sequence is that of Tyrosinase cofactor (melC1) from Streptomyces antibioticus.